The sequence spans 307 residues: Ribonuclease Z (307 aa).

The Zn(2+) site is built by His-63, His-65, Asp-67, His-68, His-140, Asp-211, and His-269. Catalysis depends on Asp-67, which acts as the Proton acceptor.

Belongs to the RNase Z family. In terms of assembly, homodimer. The cofactor is Zn(2+).

The enzyme catalyses Endonucleolytic cleavage of RNA, removing extra 3' nucleotides from tRNA precursor, generating 3' termini of tRNAs. A 3'-hydroxy group is left at the tRNA terminus and a 5'-phosphoryl group is left at the trailer molecule.. Its function is as follows. Zinc phosphodiesterase, which displays some tRNA 3'-processing endonuclease activity. Probably involved in tRNA maturation, by removing a 3'-trailer from precursor tRNA. This is Ribonuclease Z from Bacillus subtilis (strain 168).